A 258-amino-acid polypeptide reads, in one-letter code: 6-phosphogluconolactonase (258 aa).

Alanine 2 is modified (N-acetylalanine). Phosphoserine is present on serine 49. An N6-acetyllysine modification is found at lysine 180.

The protein belongs to the glucosamine/galactosamine-6-phosphate isomerase family. 6-phosphogluconolactonase subfamily.

The protein resides in the cytoplasm. The catalysed reaction is 6-phospho-D-glucono-1,5-lactone + H2O = 6-phospho-D-gluconate + H(+). Its pathway is carbohydrate degradation; pentose phosphate pathway; D-ribulose 5-phosphate from D-glucose 6-phosphate (oxidative stage): step 2/3. Hydrolysis of 6-phosphogluconolactone to 6-phosphogluconate. This is 6-phosphogluconolactonase from Homo sapiens (Human).